Consider the following 123-residue polypeptide: Large ribosomal subunit protein uL14 (123 aa).

Belongs to the universal ribosomal protein uL14 family. In terms of assembly, part of the 50S ribosomal subunit. Forms a cluster with proteins L3 and L19. In the 70S ribosome, L14 and L19 interact and together make contacts with the 16S rRNA in bridges B5 and B8.

Its function is as follows. Binds to 23S rRNA. Forms part of two intersubunit bridges in the 70S ribosome. The chain is Large ribosomal subunit protein uL14 from Blochmanniella floridana.